The primary structure comprises 807 residues: Probable phosphoketolase (807 aa).

It belongs to the XFP family. The cofactor is thiamine diphosphate.

This chain is Probable phosphoketolase, found in Mesorhizobium japonicum (strain LMG 29417 / CECT 9101 / MAFF 303099) (Mesorhizobium loti (strain MAFF 303099)).